The sequence spans 914 residues: MPELAKTYDPVGTEARWQQAWEDQGAFHPDPKAPGEPFSVVIPPPNVTGSLHMGHAFNTALIDTIVRYQRLAGKNVLCLPGTDHASIAVQTILEKQLKQEGKTRHHLGRDGFLERAWQWKAESGGRIVGQLRRLGYSVDWQRQRFTLDEGLSEAVKEAFVRLHEQGLIYRGEYLVNWCPASGSAVSDLEVEMKEVDGHLWHFRYPLSSGDGHLEVATTRPETMLGDTAVAVNPTDERYAHLVGQTLTLPFVGREIPIVADDHVEKDFGTGCVKVTPAHDPNDFAIGQRHGLPQITVMRKNGTMNKEAGQFEGLDRFEARKAVVAGLDELGLLVKVEDYRHSVPYSDRGKVPVEPLLSTQWFVRTEPLAARCREALEKQDPRFIPERWEKVYRDWLTDIRDWCISRQLWWGHRIPAWFVISETGGKYTDTTPYVVARNEVEALEKAKAKYGAAAVIEQDEDVLDTWFSSGLWPFSTLGWPDAESADLQRWYPTSTLVTGFDIIFFWVARMTMMAGAFTGEMPFQDVYIHGLVRDEQNRKMSKSAGNGIDPLLLIDRYGTDALRFALVREVAGAGQDIRLDYDRKTDTSATVEASRNFANKLWNATRFALMNLGDETPAQLGDPDPAALQLADRWILSRLARVNRETAERYSNYGLGEAAKGLYEFAWNDVCDWYLELSKRRLNPGENPSAEALADQRVAKQVLAKVISQMHQMLHPLMPHLTEELWHSVTGKSETTFLALQPWPALQESALDDALEASFADLIGAIRVVRNLRAVAGLKPSQSVPVRFVTGRGELAAVLNQGTADITALTRAESVAVMAPAEADAAPVAKALAGVSGELQVLLPIEGLVDLDALKGRLEKDIAKAEKEIKGLAGRLGNPNFADKAPPEVVAECQANLDEKQAQADLARKRLADLS.

A 'HIGH' region motif is present at residues 45–55; it reads PNVTGSLHMGH. A 'KMSKS' region motif is present at residues 538 to 542; that stretch reads KMSKS. K541 contacts ATP. A coiled-coil region spans residues 847-914; it reads LVDLDALKGR…LARKRLADLS (68 aa).

The protein belongs to the class-I aminoacyl-tRNA synthetase family. ValS type 1 subfamily. In terms of assembly, monomer.

It is found in the cytoplasm. It catalyses the reaction tRNA(Val) + L-valine + ATP = L-valyl-tRNA(Val) + AMP + diphosphate. Functionally, catalyzes the attachment of valine to tRNA(Val). As ValRS can inadvertently accommodate and process structurally similar amino acids such as threonine, to avoid such errors, it has a 'posttransfer' editing activity that hydrolyzes mischarged Thr-tRNA(Val) in a tRNA-dependent manner. The protein is Valine--tRNA ligase of Parasynechococcus marenigrum (strain WH8102).